A 375-amino-acid chain; its full sequence is Enoyl-[acyl-carrier-protein] reductase, mitochondrial (375 aa).

A mitochondrion-targeting transit peptide spans 1-37 (MAALMESVVGRALKFSSTANFRSIRRGETPTLCIKSF). Tyrosine 96 (proton donor) is an active-site residue. NADP(+) is bound by residues asparagine 169, 195–198 (TSIV), 218–220 (RDR), 287–290 (YGGM), 312–314 (FWL), and lysine 370.

The protein belongs to the zinc-containing alcohol dehydrogenase family. Quinone oxidoreductase subfamily. In terms of assembly, homodimer.

It localises to the mitochondrion. The catalysed reaction is a 2,3-saturated acyl-[ACP] + NADP(+) = a (2E)-enoyl-[ACP] + NADPH + H(+). In terms of biological role, catalyzes the NADPH-dependent reduction of trans-2-enoyl thioesters in mitochondrial fatty acid synthesis (fatty acid synthesis type II). Fatty acid chain elongation in mitochondria uses acyl carrier protein (ACP) as an acyl group carrier, but the enzyme accepts both ACP and CoA thioesters as substrates in vitro. This is Enoyl-[acyl-carrier-protein] reductase, mitochondrial from Arabidopsis thaliana (Mouse-ear cress).